A 376-amino-acid polypeptide reads, in one-letter code: Succinyl-diaminopimelate desuccinylase (376 aa).

His66 contacts Zn(2+). Residue Asp68 is part of the active site. Asp99 is a Zn(2+) binding site. The active-site Proton acceptor is Glu133. Residues Glu134, Glu162, and His349 each contribute to the Zn(2+) site.

The protein belongs to the peptidase M20A family. DapE subfamily. As to quaternary structure, homodimer. It depends on Zn(2+) as a cofactor. Requires Co(2+) as cofactor.

The enzyme catalyses N-succinyl-(2S,6S)-2,6-diaminopimelate + H2O = (2S,6S)-2,6-diaminopimelate + succinate. It functions in the pathway amino-acid biosynthesis; L-lysine biosynthesis via DAP pathway; LL-2,6-diaminopimelate from (S)-tetrahydrodipicolinate (succinylase route): step 3/3. Catalyzes the hydrolysis of N-succinyl-L,L-diaminopimelic acid (SDAP), forming succinate and LL-2,6-diaminopimelate (DAP), an intermediate involved in the bacterial biosynthesis of lysine and meso-diaminopimelic acid, an essential component of bacterial cell walls. The chain is Succinyl-diaminopimelate desuccinylase from Vesicomyosocius okutanii subsp. Calyptogena okutanii (strain HA).